Reading from the N-terminus, the 612-residue chain is Dihydroxy-acid dehydratase (612 aa).

Asp-81 serves as a coordination point for Mg(2+). [2Fe-2S] cluster is bound at residue Cys-122. Mg(2+) contacts are provided by Asp-123 and Lys-124. The residue at position 124 (Lys-124) is an N6-carboxylysine. Cys-195 is a binding site for [2Fe-2S] cluster. Glu-491 provides a ligand contact to Mg(2+). The active-site Proton acceptor is the Ser-517.

It belongs to the IlvD/Edd family. As to quaternary structure, homodimer. It depends on [2Fe-2S] cluster as a cofactor. Mg(2+) is required as a cofactor.

It catalyses the reaction (2R)-2,3-dihydroxy-3-methylbutanoate = 3-methyl-2-oxobutanoate + H2O. The catalysed reaction is (2R,3R)-2,3-dihydroxy-3-methylpentanoate = (S)-3-methyl-2-oxopentanoate + H2O. The protein operates within amino-acid biosynthesis; L-isoleucine biosynthesis; L-isoleucine from 2-oxobutanoate: step 3/4. It functions in the pathway amino-acid biosynthesis; L-valine biosynthesis; L-valine from pyruvate: step 3/4. Functionally, functions in the biosynthesis of branched-chain amino acids. Catalyzes the dehydration of (2R,3R)-2,3-dihydroxy-3-methylpentanoate (2,3-dihydroxy-3-methylvalerate) into 2-oxo-3-methylpentanoate (2-oxo-3-methylvalerate) and of (2R)-2,3-dihydroxy-3-methylbutanoate (2,3-dihydroxyisovalerate) into 2-oxo-3-methylbutanoate (2-oxoisovalerate), the penultimate precursor to L-isoleucine and L-valine, respectively. This Sinorhizobium medicae (strain WSM419) (Ensifer medicae) protein is Dihydroxy-acid dehydratase.